Here is a 288-residue protein sequence, read N- to C-terminus: Energy-coupling factor transporter ATP-binding protein EcfA2 (288 aa).

Residues 3–246 enclose the ABC transporter domain; it reads IKLEQLGYCY…PDELVDLGLS (244 aa). 40–47 is a binding site for ATP; the sequence is GHTGSGKS.

It belongs to the ABC transporter superfamily. Energy-coupling factor EcfA family. As to quaternary structure, forms a stable energy-coupling factor (ECF) transporter complex composed of 2 membrane-embedded substrate-binding proteins (S component), 2 ATP-binding proteins (A component) and 2 transmembrane proteins (T component).

The protein resides in the cell membrane. In terms of biological role, ATP-binding (A) component of a common energy-coupling factor (ECF) ABC-transporter complex. Unlike classic ABC transporters this ECF transporter provides the energy necessary to transport a number of different substrates. In Listeria monocytogenes serotype 4b (strain F2365), this protein is Energy-coupling factor transporter ATP-binding protein EcfA2.